The primary structure comprises 90 residues: Small ribosomal subunit protein bS16 (90 aa).

This sequence belongs to the bacterial ribosomal protein bS16 family.

The sequence is that of Small ribosomal subunit protein bS16 from Shouchella clausii (strain KSM-K16) (Alkalihalobacillus clausii).